We begin with the raw amino-acid sequence, 481 residues long: Dual specificity protein kinase CLK4 (481 aa).

Disordered regions lie at residues 1–46 (MRHS…CKPH) and 102–143 (SKSS…EDDE). The span at 8–24 (HCPDWDSRESWGHESYR) shows a compositional bias: basic and acidic residues. Basic residues-rich tracts occupy residues 25-34 (GSHKRKRRSH) and 106-136 (VRSRRSSPKRKRNRHCSSHQSRSKSHRRKRS). Residues Ser136 and Ser138 each carry the phosphoserine modification. Residues 159–475 (YEIVDTLGEG…LDEALQHPFF (317 aa)) enclose the Protein kinase domain. Residues 165–173 (LGEGAFGKV) and Lys189 contribute to the ATP site. Asp286 functions as the Proton acceptor in the catalytic mechanism.

Belongs to the protein kinase superfamily. CMGC Ser/Thr protein kinase family. Lammer subfamily. Interacts with UBL5. Post-translationally, autophosphorylates on all three types of residues. Expressed in liver, kidney, heart, muscle, brain and endothelial cells.

The protein resides in the nucleus. It carries out the reaction L-seryl-[protein] + ATP = O-phospho-L-seryl-[protein] + ADP + H(+). The catalysed reaction is L-threonyl-[protein] + ATP = O-phospho-L-threonyl-[protein] + ADP + H(+). It catalyses the reaction L-tyrosyl-[protein] + ATP = O-phospho-L-tyrosyl-[protein] + ADP + H(+). With respect to regulation, TG003 inhibits its kinase activity and affects the regulation of alternative splicing mediated by phosphorylation of SR proteins. In terms of biological role, dual specificity kinase acting on both serine/threonine and tyrosine-containing substrates. Phosphorylates serine- and arginine-rich (SR) proteins of the spliceosomal complex and may be a constituent of a network of regulatory mechanisms that enable SR proteins to control RNA splicing. Phosphorylates SRSF1 and SRSF3. Required for the regulation of alternative splicing of MAPT/TAU. Regulates the alternative splicing of tissue factor (F3) pre-mRNA in endothelial cells. In Homo sapiens (Human), this protein is Dual specificity protein kinase CLK4 (CLK4).